A 1116-amino-acid chain; its full sequence is Error-prone DNA polymerase 1 (1116 aa).

The protein belongs to the DNA polymerase type-C family. DnaE2 subfamily.

It localises to the cytoplasm. The catalysed reaction is DNA(n) + a 2'-deoxyribonucleoside 5'-triphosphate = DNA(n+1) + diphosphate. Functionally, DNA polymerase involved in damage-induced mutagenesis and translesion synthesis (TLS). It is not the major replicative DNA polymerase. The protein is Error-prone DNA polymerase 1 of Rhizobium meliloti (strain 1021) (Ensifer meliloti).